A 201-amino-acid polypeptide reads, in one-letter code: Recombination protein RecR (201 aa).

The segment at 59–74 (CEICGNMDTENMCRIC) adopts a C4-type zinc-finger fold. A Toprim domain is found at 82–177 (SIIAIVETVA…KISRLASGIP (96 aa)).

This sequence belongs to the RecR family.

Its function is as follows. May play a role in DNA repair. It seems to be involved in an RecBC-independent recombinational process of DNA repair. It may act with RecF and RecO. The sequence is that of Recombination protein RecR from Rickettsia conorii (strain ATCC VR-613 / Malish 7).